Here is a 162-residue protein sequence, read N- to C-terminus: MAKQKKFSGKGSARSKRKQNRKQVGPRRRVEFKYKGFTLGELQEMPIKKFMEIVPARQRRSMKKGITPKQRKLVMKIKKARRLANRGKDPRTIRTHCRDFVITPEMIGLPFGIYNGKEFIEVKLVEEAIGRFLGEFAPSRKVVQHGSPGMGATRGSMFVPIK.

Positions 1-27 are enriched in basic residues; it reads MAKQKKFSGKGSARSKRKQNRKQVGPR. Residues 1-29 are disordered; that stretch reads MAKQKKFSGKGSARSKRKQNRKQVGPRRR.

Belongs to the universal ribosomal protein uS19 family.

Its function is as follows. Protein S19 forms a complex with S13 that binds strongly to the 16S ribosomal RNA. This is Small ribosomal subunit protein uS19 from Methanococcus aeolicus (strain ATCC BAA-1280 / DSM 17508 / OCM 812 / Nankai-3).